The chain runs to 94 residues: Ubiquitin-like protein ATG12B (94 aa).

Ala2 bears the N-acetylalanine mark. Gly94 participates in a covalent cross-link: Glycyl lysine isopeptide (Gly-Lys) (interchain with K-128 in ATG5).

Belongs to the ATG12 family. In terms of tissue distribution, ubiquitous.

It localises to the cytoplasm. Functionally, ubiquitin-like protein involved in cytoplasm to vacuole transport (Cvt) and autophagy vesicles formation. Conjugation with ATG5 through a ubiquitin-like conjugating system involving also ATG7 as an E1-like activating enzyme and ATG10 as an E2-like conjugating enzyme, is essential for its function. ATG12/ATG5 conjugate has an essential role in plant nutrient recycling. In Arabidopsis thaliana (Mouse-ear cress), this protein is Ubiquitin-like protein ATG12B (ATG12B).